The chain runs to 329 residues: Aspartate--ammonia ligase (329 aa).

The protein belongs to the class-II aminoacyl-tRNA synthetase family. AsnA subfamily.

It localises to the cytoplasm. The catalysed reaction is L-aspartate + NH4(+) + ATP = L-asparagine + AMP + diphosphate + H(+). It participates in amino-acid biosynthesis; L-asparagine biosynthesis; L-asparagine from L-aspartate (ammonia route): step 1/1. In Ureaplasma urealyticum serovar 10 (strain ATCC 33699 / Western), this protein is Aspartate--ammonia ligase.